We begin with the raw amino-acid sequence, 162 residues long: MEITMTTAYYRHKYCPDTSYLRPKYIYIPKTPVRKFFESLIPPQIIDSEKWTDLHLAVGYKNIKLVQSVCNKHNINIKDAKGRTALELAILGDNLEIVQFLVQNGGVVAPNNMYGWSAIHLAIKVGNLDIVKYLYENTKFNEHDKYGLTLQNWAEKVGNEQI.

ANK repeat units follow at residues 49–77, 81–110, and 114–145; these read EKWT…NINI, KGRT…VVAP, and YGWS…EHDK.

This Rickettsia bellii (strain RML369-C) protein is Putative ankyrin repeat protein RBE_0151.